The sequence spans 384 residues: MVRRLLISLIRAEARRGRNQILPEAAFTGDPRIDEEGLGFDSLARLDLIGAVRDFFDLSRTGIEDYVYVEPTLQGWIDRIMQHFDLLAARSETAQAVFRTSGSTGTPKPIPHPWPKLMREAASMARDQGLVPAPGGAVIGLVPAHHLFGCLFTALLPELAGAALRDLTAAPPASALRTAQPGDLIIATPHLWAHLGAAGAFPPGLRGVSSGAPMPDALWHSLLAAGLEDLTEVYGASETGGIGLRRAPGAAFTLLPFLSRSADDGISDGPAPLPLQDRLRWTGPVRFVIEGRLDQALQVGGVNVRLGHVKSVLEAEPGVEALALRLGGDRLKAFVVCAADAEAGLEARLRARAEAGLDAPARPQHYRFGRALPLTREGKARDWD.

Belongs to the ATP-dependent AMP-binding enzyme family.

It carries out the reaction (E)-4-coumarate + ATP + CoA = (E)-4-coumaroyl-CoA + AMP + diphosphate. Its function is as follows. Converts p-coumaric acid into p-coumaryl CoA. This is necessary for the activation of the photoactive yellow protein (PYP) chromophore. In Rhodobacter capsulatus (strain ATCC BAA-309 / NBRC 16581 / SB1003), this protein is 4-coumarate--CoA ligase (pcl).